The sequence spans 323 residues: MAESSEPPVVLLHRPPSLTFMDEILTREFRTLITDTSSSESLPSFFPRHASSARAFVISGRLPVTDELLSHLPSLQILVCTSVGIDHIDLAACKRRGIVITNAGNAFSDDVADCAVGLLISVLRRIPAADRYVRSGNWAKFGDFQLGSKVSGKRVGIVGLGSIGSFVAKRLESFGCVISYNSRSQKQSSPYRYYSDILSLAENNDVLVLCCSLTDETHHIVNREVMELLGKDGVVINVGRGKLIDEKEMVKCLVDGVIGGAGLDVFENEPAVPQELFGLDNVVLSPHFAVATPGSLDNVAQIALANLKAFFSNRPLLSPVQLD.

Residues 160–163 (LGSI), 182–184 (SRS), and 238–240 (VGR) each bind NADP(+). Catalysis depends on residues Arg-240 and Glu-269. Residue His-287 is the Proton donor of the active site. Residue 287–289 (HFA) participates in NADP(+) binding.

It belongs to the D-isomer specific 2-hydroxyacid dehydrogenase family. GyaR subfamily. In terms of assembly, homodimer.

It carries out the reaction glycolate + NADP(+) = glyoxylate + NADPH + H(+). The catalysed reaction is (R)-glycerate + NADP(+) = 3-hydroxypyruvate + NADPH + H(+). Inhibited by oxalate. In terms of biological role, catalyzes the NADPH-dependent reduction of glyoxylate and hydroxypyruvate (HP) into glycolate and glycerate. Mostly active in the presence of NADPH and glyoxylate. This chain is Glyoxylate/hydroxypyruvate reductase HPR3 (HPR3), found in Arabidopsis thaliana (Mouse-ear cress).